The primary structure comprises 390 residues: Digeranylgeranylglycerophospholipid reductase (390 aa).

FAD is bound by residues Ala-18, Glu-37, Cys-48, Ala-49, Ala-51, Arg-98, Val-122, Asp-278, Gly-290, and Ile-291. Val-368 serves as a coordination point for a 2,3-bis-O-(geranylgeranyl)-sn-glycerol 1-phospholipid.

The protein belongs to the geranylgeranyl reductase family. DGGGPL reductase subfamily. FAD is required as a cofactor.

It catalyses the reaction a 2,3-bis-O-phytanyl-sn-glycerol 1-phospholipid + 8 A = a 2,3-bis-O-(geranylgeranyl)-sn-glycerol 1-phospholipid + 8 AH2. It carries out the reaction 2,3-bis-O-(phytanyl)-sn-glycerol 1-phosphate + 8 A = 2,3-bis-O-(geranylgeranyl)-sn-glycerol 1-phosphate + 8 AH2. The enzyme catalyses CDP-2,3-bis-O-(geranylgeranyl)-sn-glycerol + 8 AH2 = CDP-2,3-bis-O-(phytanyl)-sn-glycerol + 8 A. The catalysed reaction is archaetidylserine + 8 AH2 = 2,3-bis-O-phytanyl-sn-glycero-3-phospho-L-serine + 8 A. It functions in the pathway membrane lipid metabolism; glycerophospholipid metabolism. In terms of biological role, is involved in the reduction of 2,3-digeranylgeranylglycerophospholipids (unsaturated archaeols) into 2,3-diphytanylglycerophospholipids (saturated archaeols) in the biosynthesis of archaeal membrane lipids. Catalyzes the formation of archaetidic acid (2,3-di-O-phytanyl-sn-glyceryl phosphate) from 2,3-di-O-geranylgeranylglyceryl phosphate (DGGGP) via the hydrogenation of each double bond of the isoprenoid chains. Is also probably able to reduce double bonds of geranyl groups in CDP-2,3-bis-O-(geranylgeranyl)-sn-glycerol and archaetidylserine, thus acting at various stages in the biosynthesis of archaeal membrane lipids. This chain is Digeranylgeranylglycerophospholipid reductase, found in Methanococcus vannielii (strain ATCC 35089 / DSM 1224 / JCM 13029 / OCM 148 / SB).